Reading from the N-terminus, the 417-residue chain is Serine hydroxymethyltransferase (417 aa).

(6S)-5,6,7,8-tetrahydrofolate is bound by residues leucine 121 and 125–127 (GHL). Lysine 229 is subject to N6-(pyridoxal phosphate)lysine. 355 to 357 (SPF) is a (6S)-5,6,7,8-tetrahydrofolate binding site.

It belongs to the SHMT family. As to quaternary structure, homodimer. The cofactor is pyridoxal 5'-phosphate.

It localises to the cytoplasm. The catalysed reaction is (6R)-5,10-methylene-5,6,7,8-tetrahydrofolate + glycine + H2O = (6S)-5,6,7,8-tetrahydrofolate + L-serine. It functions in the pathway one-carbon metabolism; tetrahydrofolate interconversion. The protein operates within amino-acid biosynthesis; glycine biosynthesis; glycine from L-serine: step 1/1. Its function is as follows. Catalyzes the reversible interconversion of serine and glycine with tetrahydrofolate (THF) serving as the one-carbon carrier. This reaction serves as the major source of one-carbon groups required for the biosynthesis of purines, thymidylate, methionine, and other important biomolecules. Also exhibits THF-independent aldolase activity toward beta-hydroxyamino acids, producing glycine and aldehydes, via a retro-aldol mechanism. This is Serine hydroxymethyltransferase from Edwardsiella ictaluri (strain 93-146).